We begin with the raw amino-acid sequence, 155 residues long: Small ribosomal subunit protein uS7cz/uS7cy (155 aa).

This sequence belongs to the universal ribosomal protein uS7 family. As to quaternary structure, part of the 30S ribosomal subunit.

Its subcellular location is the plastid. The protein localises to the chloroplast. Functionally, one of the primary rRNA binding proteins, it binds directly to 16S rRNA where it nucleates assembly of the head domain of the 30S subunit. The polypeptide is Small ribosomal subunit protein uS7cz/uS7cy (rps7-A) (Chloranthus spicatus (Chulantree)).